Consider the following 261-residue polypeptide: Tryptophan synthase alpha chain (261 aa).

Active-site proton acceptor residues include E47 and D58.

The protein belongs to the TrpA family. In terms of assembly, tetramer of two alpha and two beta chains.

The catalysed reaction is (1S,2R)-1-C-(indol-3-yl)glycerol 3-phosphate + L-serine = D-glyceraldehyde 3-phosphate + L-tryptophan + H2O. Its pathway is amino-acid biosynthesis; L-tryptophan biosynthesis; L-tryptophan from chorismate: step 5/5. In terms of biological role, the alpha subunit is responsible for the aldol cleavage of indoleglycerol phosphate to indole and glyceraldehyde 3-phosphate. In Neisseria meningitidis serogroup B (strain ATCC BAA-335 / MC58), this protein is Tryptophan synthase alpha chain.